A 121-amino-acid chain; its full sequence is MADKGSKPRKEEVVSREYTINLHKRLHGCTFKKKAPKAIKEIRKFAQKAMGTTDVRVDVKLNKHIWSRGIRSVPRRIRVRIARKRNDDEDAKEELYSLVTVAEIPEGGLKGLGTQVIDEEE.

The protein belongs to the eukaryotic ribosomal protein eL31 family.

The protein is Large ribosomal subunit protein eL31 (RPL31) of Perilla frutescens (Beefsteak mint).